Here is a 188-residue protein sequence, read N- to C-terminus: Elongation factor P (188 aa).

This sequence belongs to the elongation factor P family.

Its subcellular location is the cytoplasm. It functions in the pathway protein biosynthesis; polypeptide chain elongation. Functionally, involved in peptide bond synthesis. Stimulates efficient translation and peptide-bond synthesis on native or reconstituted 70S ribosomes in vitro. Probably functions indirectly by altering the affinity of the ribosome for aminoacyl-tRNA, thus increasing their reactivity as acceptors for peptidyl transferase. The chain is Elongation factor P from Caulobacter vibrioides (strain ATCC 19089 / CIP 103742 / CB 15) (Caulobacter crescentus).